The following is a 408-amino-acid chain: Argininosuccinate synthase (408 aa).

14–22 (AYSGGLDTS) serves as a coordination point for ATP. Tyr92 and Ser97 together coordinate L-citrulline. Gly122 is an ATP binding site. Residues Thr124, Asn128, and Asp129 each contribute to the L-aspartate site. Asn128 is an L-citrulline binding site. The L-citrulline site is built by Arg132, Ser181, Ser190, Glu266, and Tyr278.

It belongs to the argininosuccinate synthase family. Type 1 subfamily. In terms of assembly, homotetramer.

Its subcellular location is the cytoplasm. The enzyme catalyses L-citrulline + L-aspartate + ATP = 2-(N(omega)-L-arginino)succinate + AMP + diphosphate + H(+). The protein operates within amino-acid biosynthesis; L-arginine biosynthesis; L-arginine from L-ornithine and carbamoyl phosphate: step 2/3. This Moorella thermoacetica (strain ATCC 39073 / JCM 9320) protein is Argininosuccinate synthase.